The following is a 175-amino-acid chain: Large ribosomal subunit protein uL10 (175 aa).

The protein belongs to the universal ribosomal protein uL10 family. In terms of assembly, part of the ribosomal stalk of the 50S ribosomal subunit. The N-terminus interacts with L11 and the large rRNA to form the base of the stalk. The C-terminus forms an elongated spine to which L12 dimers bind in a sequential fashion forming a multimeric L10(L12)X complex.

Forms part of the ribosomal stalk, playing a central role in the interaction of the ribosome with GTP-bound translation factors. The protein is Large ribosomal subunit protein uL10 of Mycolicibacterium smegmatis (strain ATCC 700084 / mc(2)155) (Mycobacterium smegmatis).